The primary structure comprises 681 residues: Long-chain-fatty-acid--CoA ligase heimdall (681 aa).

ATP is bound by residues 223-231 (TSGTVGMPK), 414-419 (ECYGMS), Asp-491, Arg-506, and Lys-639.

Belongs to the ATP-dependent AMP-binding enzyme family. Bubblegum subfamily.

It catalyses the reaction a long-chain fatty acid + ATP + CoA = a long-chain fatty acyl-CoA + AMP + diphosphate. Mediates activation of long-chain fatty acids for both synthesis of cellular lipids, and degradation via beta-oxidation. Probably by regulating lipid storage and catabolism, plays a role in neuronal function. This Drosophila melanogaster (Fruit fly) protein is Long-chain-fatty-acid--CoA ligase heimdall.